The chain runs to 545 residues: E3 ubiquitin-protein ligase ipaH9.8 (545 aa).

Positions 1 to 242 (MLPINNNFSL…YHGPRIYFSM (242 aa)) are interaction with target proteins. LRR repeat units follow at residues 57 to 77 (NSDELRLDRLNLSSLPDNLPA), 78 to 99 (QITLLNVSYNQLTNLPELPVTL), 100 to 117 (KKLYSASNKLSELPVLPP), 118 to 139 (ALESLQVQHNELENLPALPDSL), 140 to 157 (LTMNISYNEIVSLPSLPL), 158 to 179 (ALKNLRATRNFLTELPAFSEGN), 182 to 203 (VVREYFFDRNQISHIPESILNL), and 205 to 228 (NECSIHISDNPLSSHALQALQRLT). Residues 243–250 (SDGQQNTL) are linker. The interval 251–545 (HRPLADAVTA…SENGSQLHHS (295 aa)) is E3 ubiquitin-protein ligase catalytic domain. The 293-residue stretch at 253 to 545 (PLADAVTAWF…SENGSQLHHS (293 aa)) folds into the NEL domain. Cys-337 acts as the Glycyl thioester intermediate in catalysis.

The protein belongs to the LRR-containing bacterial E3 ligase family. Also interacts with human and mouse U2AF1 (U2AF35). Post-translationally, ubiquitinated in the presence of host E1 ubiquitin-activating enzyme, E2 ubiquitin-conjugating enzyme and ubiquitin.

The protein resides in the secreted. It localises to the host cytoplasm. It is found in the host nucleus. The enzyme catalyses S-ubiquitinyl-[E2 ubiquitin-conjugating enzyme]-L-cysteine + [acceptor protein]-L-lysine = [E2 ubiquitin-conjugating enzyme]-L-cysteine + N(6)-ubiquitinyl-[acceptor protein]-L-lysine.. Exists in an autoinhibited state in the absence of substrate protein, due to interactions of the leucine-rich repeats with NEL domain. Is activated upon binding to a substrate protein. Effector E3 ubiquitin ligase that interferes with host's ubiquitination pathway and modulates the acute inflammatory responses, thus facilitating bacterial colonization within the host cell. Interacts with IKBKG (NEMO) and TNIP1 (ABIN-1), a ubiquitin-binding adapter protein, which results in TNIP1-dependent 'Lys-27'-linked polyubiquitination of IKBKG. Consequently, polyubiquitinated IKBKG undergoes proteasome-dependent degradation, which perturbs NF-kappa-B activation during bacterial infection. Mediates polyubiquitination of host U2AF1, leading to its proteasomal degradation. Catalyzes 'Lys-48'-linked polyubiquitination and subsequent degradation of a subset of host guanylate-binding proteins (GBP1, GBP2, GBP4 and GBP6), thereby suppressing host cell defense. In contrast, host GBP3 and GBP7 are not ubiquitinated by IpaH9.8. Uses UBE2D2 (UBCH5B) as an E2 ubiquitin-conjugating enzyme. This chain is E3 ubiquitin-protein ligase ipaH9.8 (ipaH9.8), found in Shigella boydii serotype 4 (strain Sb227).